The following is a 398-amino-acid chain: Nematocin receptor 2 (398 aa).

Over 1-25 the chain is Extracellular; the sequence is MNNNTLNITNQRTAAAMSQIYFLVV. Asn3 and Asn7 each carry an N-linked (GlcNAc...) asparagine glycan. A helical transmembrane segment spans residues 26 to 46; the sequence is YQTAVMIVSLLGNLFLLFVIF. The Cytoplasmic segment spans residues 47–58; sequence RANQVMKRRVSP. Residues 59–79 traverse the membrane as a helical segment; it reads VQLLIIHTCVADLLFALLSLG. At 80-99 the chain is on the extracellular side; it reads TEILTLRTYPQYYGSNFVCK. An intrachain disulfide couples Cys98 to Cys173. Residues 100-120 form a helical membrane-spanning segment; the sequence is LMRYVQMFPMYASPFLLVAIS. Residues 121 to 143 are Cytoplasmic-facing; sequence ADRYQAICRPLAHFRSSRYRRPN. Residues 144 to 164 traverse the membrane as a helical segment; sequence WMAAIAWGLALVLSIPQFFVW. Over 165–187 the chain is Extracellular; that stretch reads TKHSKTGRCSTIYGQNKNTVKIT. The helical transmembrane segment at 188–208 threads the bilayer; sequence YVIMFNTLAWLLPSILAAVFY. Over 209-271 the chain is Cytoplasmic; it reads YCVCKAVRLS…DRKRVQTVRL (63 aa). A helical membrane pass occupies residues 272-292; the sequence is TITIVACNFFLWMPFCLINVI. At 293-302 the chain is on the extracellular side; the sequence is QALWPEISHI. A helical transmembrane segment spans residues 303–325; it reads MFINYVAILGNLNSCLNPWIYIL. Over 326-398 the chain is Cytoplasmic; sequence FNRSHVRKAL…DSTSLKTNSN (73 aa).

It belongs to the G-protein coupled receptor 1 family. Vasopressin/oxytocin receptor subfamily. In terms of tissue distribution, detected in the ADL sensory neurons, the RMED and RMEV motor neurons, and the PQR tail neuron. In males, detected in SPC tail neurons involved in spicule penetration and sperm transfer, and male-specific oblique muscles involved in vulval contact.

The protein localises to the cell membrane. In terms of biological role, not directly activated by nematocin. May modulate activity of the nematocin receptor ntr-1, leading to reduced intracellular cAMP production. Plays a role in male mating behavior. In Caenorhabditis elegans, this protein is Nematocin receptor 2.